A 126-amino-acid chain; its full sequence is Aspartate 1-decarboxylase (126 aa).

Ser25 (schiff-base intermediate with substrate; via pyruvic acid) is an active-site residue. Position 25 is a pyruvic acid (Ser) (Ser25). Residue Thr57 participates in substrate binding. Tyr58 serves as the catalytic Proton donor. Gly73–Ala75 contacts substrate.

Belongs to the PanD family. Heterooctamer of four alpha and four beta subunits. Requires pyruvate as cofactor. In terms of processing, is synthesized initially as an inactive proenzyme, which is activated by self-cleavage at a specific serine bond to produce a beta-subunit with a hydroxyl group at its C-terminus and an alpha-subunit with a pyruvoyl group at its N-terminus.

It localises to the cytoplasm. It catalyses the reaction L-aspartate + H(+) = beta-alanine + CO2. Its pathway is cofactor biosynthesis; (R)-pantothenate biosynthesis; beta-alanine from L-aspartate: step 1/1. Its function is as follows. Catalyzes the pyruvoyl-dependent decarboxylation of aspartate to produce beta-alanine. In Stutzerimonas stutzeri (strain A1501) (Pseudomonas stutzeri), this protein is Aspartate 1-decarboxylase.